Here is a 287-residue protein sequence, read N- to C-terminus: MSKYLVPVCASISLVAVFGALVAMHSIVVDIDTMREEIVTGVHDMKVMSDDAWNRMIGFTKPSLDSESRSAAFASVFRNKRSAYPSQCNCDANSQGCPPGPPGPPGLPGGRGDQGPSGDKGRDGASGVSLAVTHHLPGGCIQCPQGPPGETGPDGDIGEPGFPGASGSAGQCGEDGAPGEAGITGEQGPQGEPGTEGSEGPTGQDGTIGGPGLPGQPGTPGWPGSQGEPGKNGDSGVDGEQGPQGPQGPDGQPGRDADNGQPGLPGKDGSIGPDANYCPCPARAKKH.

An N-terminal signal peptide occupies residues 1-19; it reads MSKYLVPVCASISLVAVFG. Residues 95–287 form a disordered region; the sequence is QGCPPGPPGP…CPCPARAKKH (193 aa). Residues 98 to 107 show a composition bias toward pro residues; it reads PPGPPGPPGL. 2 Collagen-like domains span residues 145–200 and 215–273; these read QGPP…GSEG and GQPG…SIGP. Residues 184–205 are compositionally biased toward low complexity; the sequence is TGEQGPQGEPGTEGSEGPTGQD. Residues 206-215 show a composition bias toward gly residues; the sequence is GTIGGPGLPG. A compositionally biased stretch (low complexity) spans 238–252; that stretch reads DGEQGPQGPQGPDGQ.

The protein belongs to the cuticular collagen family. As to quaternary structure, collagen polypeptide chains are complexed within the cuticle by disulfide bonds and other types of covalent cross-links.

It localises to the nucleus. In terms of biological role, probable cuticular collagen-like protein. Nematode cuticles are composed largely of collagen-like proteins. The cuticle functions both as an exoskeleton and as a barrier to protect the worm from its environment. Acts downstream of the Wnt signaling pathway, perhaps in the formation of the adult cuticle. The polypeptide is Cuticle collagen 38 (Caenorhabditis elegans).